A 92-amino-acid chain; its full sequence is Acylphosphatase (92 aa).

An Acylphosphatase-like domain is found at 5–92; it reads YIVAYVYGVV…TPFETFSIRY (88 aa). Catalysis depends on residues Arg-20 and Asn-38.

This sequence belongs to the acylphosphatase family.

The enzyme catalyses an acyl phosphate + H2O = a carboxylate + phosphate + H(+). The chain is Acylphosphatase (acyP) from Yersinia pseudotuberculosis serotype O:1b (strain IP 31758).